The sequence spans 232 residues: Protein TIFY 10c (232 aa).

Residues 54-73 (PPAAGAGGAFRPPPTTMNLL) form a disordered region. The region spanning 114 to 149 (AGEKAQQLTIFYGGKVVVFENFPSTKVKDLLQIVST) is the Tify domain. Residues 151–176 (DGVDKNTGTAATQSLPRPAHNSLPDL) form a disordered region. Over residues 156-165 (NTGTAATQSL) the composition is skewed to polar residues. The Jas signature appears at 177 to 202 (PIARRNSLHRFLEKRKGRMNANAPYQ). The Nuclear localization signal signature appears at 179–186 (ARRNSLHR).

This sequence belongs to the TIFY/JAZ family. Interacts with BHLH148. Interacts with COI1B in a coronatine-dependent manner. Coronatine is an analog of jasmonoyl isoleucine (JA-Ile). Interacts with TIFY5/JAZ2, TIFY6B/JAZ4, TIFY9/JAZ5, TIFY11A, TIFY11D/JAZ12 and TIFY11G/JAZ15. In terms of processing, ubiquitinated. Increase in jasmonoyl isoleucine (JA-Ile) levels mediates its degradation via COI1B-mediated proteasome pathway.

The protein resides in the nucleus. It is found in the cytoplasm. The protein localises to the cytosol. Its function is as follows. Repressor of jasmonate (JA) responses. Acts as a repressor of JA-induced resistance to the bacterial blight pathogen Xanthomonas oryzae pv. oryzae (Xoo). Regulates JA-induced accumulation of linalool at the transcriptional level of linalool synthase gene LIS. Linalool is important for resistance to bacterial blight pathogen Xoo. The polypeptide is Protein TIFY 10c (Oryza sativa subsp. indica (Rice)).